The following is a 313-amino-acid chain: uncharacterized protein (313 aa).

3 helical membrane passes run 41–61, 68–88, and 102–122; these read LAGT…GLMV, VHSV…FHYF, and QLLL…KLVL.

The protein belongs to the cytochrome b family.

It localises to the mitochondrion membrane. This is an uncharacterized protein from Arabidopsis thaliana (Mouse-ear cress).